We begin with the raw amino-acid sequence, 366 residues long: DNA polymerase IV (366 aa).

One can recognise a UmuC domain in the interval 6 to 197; sequence IIHVDMDYFY…LKVSKLWGIG (192 aa). Mg(2+)-binding residues include aspartate 10 and aspartate 114. Residue glutamate 115 is part of the active site.

This sequence belongs to the DNA polymerase type-Y family. As to quaternary structure, monomer. Requires Mg(2+) as cofactor.

The protein resides in the cytoplasm. It carries out the reaction DNA(n) + a 2'-deoxyribonucleoside 5'-triphosphate = DNA(n+1) + diphosphate. Functionally, poorly processive, error-prone DNA polymerase involved in untargeted mutagenesis. Copies undamaged DNA at stalled replication forks, which arise in vivo from mismatched or misaligned primer ends. These misaligned primers can be extended by PolIV. Exhibits no 3'-5' exonuclease (proofreading) activity. May be involved in translesional synthesis. In Methanosarcina acetivorans (strain ATCC 35395 / DSM 2834 / JCM 12185 / C2A), this protein is DNA polymerase IV.